Consider the following 679-residue polypeptide: UvrABC system protein B (679 aa).

The Helicase ATP-binding domain occupies 25–190 (EGVNQGQRYQ…SRNDFDITRG (166 aa)). Residue 38–45 (GATGTGKT) coordinates ATP. The Beta-hairpin motif lies at 91-114 (YYDYYQPEAYVPVSDTYIAKTASI). Residues 429-591 (QVDDLLAEIR…IVPRPAGKRA (163 aa)) enclose the Helicase C-terminal domain. One can recognise a UVR domain in the interval 639-674 (PELIDQLETKMKEAAKNLNFEEAASLRDRIKKFRQK).

The protein belongs to the UvrB family. Forms a heterotetramer with UvrA during the search for lesions. Interacts with UvrC in an incision complex.

It localises to the cytoplasm. Its function is as follows. The UvrABC repair system catalyzes the recognition and processing of DNA lesions. A damage recognition complex composed of 2 UvrA and 2 UvrB subunits scans DNA for abnormalities. Upon binding of the UvrA(2)B(2) complex to a putative damaged site, the DNA wraps around one UvrB monomer. DNA wrap is dependent on ATP binding by UvrB and probably causes local melting of the DNA helix, facilitating insertion of UvrB beta-hairpin between the DNA strands. Then UvrB probes one DNA strand for the presence of a lesion. If a lesion is found the UvrA subunits dissociate and the UvrB-DNA preincision complex is formed. This complex is subsequently bound by UvrC and the second UvrB is released. If no lesion is found, the DNA wraps around the other UvrB subunit that will check the other stand for damage. This is UvrABC system protein B from Prochlorococcus marinus (strain MIT 9303).